Here is a 203-residue protein sequence, read N- to C-terminus: Large ribosomal subunit protein bL25 (203 aa).

It belongs to the bacterial ribosomal protein bL25 family. CTC subfamily. As to quaternary structure, part of the 50S ribosomal subunit; part of the 5S rRNA/L5/L18/L25 subcomplex. Contacts the 5S rRNA. Binds to the 5S rRNA independently of L5 and L18.

Its function is as follows. This is one of the proteins that binds to the 5S RNA in the ribosome where it forms part of the central protuberance. In Wolbachia pipientis wMel, this protein is Large ribosomal subunit protein bL25.